We begin with the raw amino-acid sequence, 579 residues long: Putative ABC transporter ATP-binding protein VPA1482 (579 aa).

2 ABC transporter domains span residues 3–244 and 299–533; these read IEFS…GIRE and LEVR…ANLT. ATP is bound by residues 37-44 and 332-339; these read GPSGSGKS and GKNGSGKS.

The protein belongs to the ABC transporter superfamily.

The protein localises to the cell inner membrane. Functionally, probably part of an ABC transporter complex. Responsible for energy coupling to the transport system. The protein is Putative ABC transporter ATP-binding protein VPA1482 of Vibrio parahaemolyticus serotype O3:K6 (strain RIMD 2210633).